Here is a 276-residue protein sequence, read N- to C-terminus: NH(3)-dependent NAD(+) synthetase (276 aa).

39-46 (GLSGGVDS) is a binding site for ATP. Asp45 serves as a coordination point for Mg(2+). Arg123 is a binding site for deamido-NAD(+). Thr143 is a binding site for ATP. Glu148 lines the Mg(2+) pocket. 2 residues coordinate deamido-NAD(+): Lys156 and Asp163. Lys172 and Ser194 together coordinate ATP. A deamido-NAD(+)-binding site is contributed by 254 to 255 (HK).

This sequence belongs to the NAD synthetase family. In terms of assembly, homodimer.

The enzyme catalyses deamido-NAD(+) + NH4(+) + ATP = AMP + diphosphate + NAD(+) + H(+). The protein operates within cofactor biosynthesis; NAD(+) biosynthesis; NAD(+) from deamido-NAD(+) (ammonia route): step 1/1. Functionally, catalyzes the ATP-dependent amidation of deamido-NAD to form NAD. Uses ammonia as a nitrogen source. The protein is NH(3)-dependent NAD(+) synthetase of Hyperthermus butylicus (strain DSM 5456 / JCM 9403 / PLM1-5).